The primary structure comprises 679 residues: Sodium-dependent phosphate transporter 1 (679 aa).

6 consecutive transmembrane segments (helical) span residues 21 to 41 (YLWM…SVGA), 62 to 82 (ACIL…AKVS), 100 to 120 (GLLM…QLVA), 158 to 178 (IVMS…ILFF), 203 to 223 (ACTV…LLGF), and 230 to 250 (GTIL…WFFV). A phosphoserine mark is found at serine 265 and serine 269. 4 helical membrane passes run 511-531 (VSLL…FAHG), 558-578 (VATP…GLWV), 600-620 (FSIE…GLPI), and 650-670 (IFMA…AIMA). The a stretch occupies residues 550–558 (DTGDVSSKV).

This sequence belongs to the inorganic phosphate transporter (PiT) (TC 2.A.20) family. As to expression, ubiquitously expressed.

The protein localises to the cell membrane. The catalysed reaction is 2 Na(+)(out) + phosphate(out) = 2 Na(+)(in) + phosphate(in). Sodium-phosphate symporter which preferentially transports the monovalent form of phosphate with a stoichiometry of two sodium ions per phosphate ion. May play a role in extracellular matrix and cartilage calcification as well as in vascular calcification. Essential for cell proliferation but this function is independent of its phosphate transporter activity. In terms of biological role, (Microbial infection) May function as a retroviral receptor as it confers human cells susceptibility to infection to Gibbon Ape Leukemia Virus (GaLV), Simian sarcoma-associated virus (SSAV) and Feline leukemia virus subgroup B (FeLV-B) as well as 10A1 murine leukemia virus (10A1 MLV). In Homo sapiens (Human), this protein is Sodium-dependent phosphate transporter 1 (SLC20A1).